The primary structure comprises 409 residues: Peptidase T (409 aa).

Residue H78 coordinates Zn(2+). Residue D80 is part of the active site. D140 contacts Zn(2+). E174 (proton acceptor) is an active-site residue. 3 residues coordinate Zn(2+): E175, D197, and H379.

This sequence belongs to the peptidase M20B family. The cofactor is Zn(2+).

It localises to the cytoplasm. The catalysed reaction is Release of the N-terminal residue from a tripeptide.. In terms of biological role, cleaves the N-terminal amino acid of tripeptides. The protein is Peptidase T of Vibrio parahaemolyticus serotype O3:K6 (strain RIMD 2210633).